Reading from the N-terminus, the 326-residue chain is High-affinity zinc uptake system protein ZnuA (326 aa).

The N-terminal stretch at 1–22 (MIRPSSLVLAAALGTAALPARA) is a signal peptide. His-59 is a binding site for Zn(2+). Positions 117–155 (GGEHEHEHEHEHEHEHEHEHDGHGHAEEQAHHDHDHSGT) are enriched in basic and acidic residues. The interval 117–161 (GGEHEHEHEHEHEHEHEHEHDGHGHAEEQAHHDHDHSGTDPHAWL) is disordered. Residues His-158, His-222, and Asp-295 each contribute to the Zn(2+) site. A disulfide bridge connects residues Cys-267 and Cys-322.

The protein belongs to the bacterial solute-binding protein 9 family. Monomer.

The protein localises to the periplasm. Functionally, part of the ATP-binding cassette (ABC) transport system ZnuABC involved in zinc import. Binds zinc with high affinity and specificity and delivers it to the membrane permease for translocation into the cytoplasm. This Paracoccus denitrificans (strain Pd 1222) protein is High-affinity zinc uptake system protein ZnuA.